Reading from the N-terminus, the 488-residue chain is ATP synthase subunit beta, chloroplastic (488 aa).

170–177 contributes to the ATP binding site; it reads GGAGVGKT.

Belongs to the ATPase alpha/beta chains family. As to quaternary structure, F-type ATPases have 2 components, CF(1) - the catalytic core - and CF(0) - the membrane proton channel. CF(1) has five subunits: alpha(3), beta(3), gamma(1), delta(1), epsilon(1). CF(0) has four main subunits: a(1), b(1), b'(1) and c(9-12).

Its subcellular location is the plastid. It localises to the chloroplast thylakoid membrane. It catalyses the reaction ATP + H2O + 4 H(+)(in) = ADP + phosphate + 5 H(+)(out). Produces ATP from ADP in the presence of a proton gradient across the membrane. The catalytic sites are hosted primarily by the beta subunits. This is ATP synthase subunit beta, chloroplastic from Picea abies (Norway spruce).